The sequence spans 70 residues: Turripeptide Pal9.2 (70 aa).

An N-terminal signal peptide occupies residues 1-20 (MKVYCLLVVLLVGLVSQTQG). Residues 21 to 70 (QLDKKCNMACTLDYRPVCGSDGKTYPNRCALTSTACESQQSITVLHDGEC) form the Kazal-like domain. 3 disulfides stabilise this stretch: cysteine 26/cysteine 56, cysteine 30/cysteine 49, and cysteine 38/cysteine 70.

The protein belongs to the conopeptide P-like superfamily. As to expression, expressed by the venom duct.

The protein resides in the secreted. In terms of biological role, acts as a neurotoxin by inhibiting an ion channel. May also act as a serine protease inhibitor, since it possess the kazal serine protease inhibitor signature. This chain is Turripeptide Pal9.2, found in Polystira albida (White giant-turris).